A 111-amino-acid chain; its full sequence is Cytochrome c2 (111 aa).

Residues Cys-14, Cys-17, His-18, and Met-83 each coordinate heme c.

This sequence belongs to the cytochrome c family. Binds 1 heme c group covalently per subunit.

In terms of biological role, cytochrome c2 is found mainly in purple, non-sulfur, photosynthetic bacteria where it functions as the electron donor to the oxidized bacteriochlorophyll in the photophosphorylation pathway. However, it may also have a role in the respiratory chain and is found in some non-photosynthetic bacteria. The protein is Cytochrome c2 of Agrobacterium tumefaciens (strain II Chrys).